A 756-amino-acid chain; its full sequence is Alpha-1,2-mannosyltransferase MNN26 (756 aa).

Residues 1–10 (MSLRRLSPSH) lie on the Cytoplasmic side of the membrane. The helical transmembrane segment at 11 to 31 (LILGTLVLGVIIFNLYVLTST) threads the bilayer. Residues 32-756 (HEDIKKVKGP…NGKNKQGAAS (725 aa)) are Extracellular-facing. Positions 723 to 734 (LGEKSQPKQPEI) are enriched in polar residues. A disordered region spans residues 723–756 (LGEKSQPKQPEINNNNNNNNNDDDNGKNKQGAAS).

It belongs to the MNN1/MNT family.

It is found in the golgi apparatus membrane. It functions in the pathway protein modification; protein glycosylation. Functionally, alpha-1,2-mannosyltransferase required for cell wall integrity. Responsible for addition of the first alpha-1,2-linked mannose to form the branches on the mannan backbone of oligosaccharides. Addition of alpha-1,2-mannose is required for stabilization of the alpha-1,6-mannose backbone and hence regulates mannan fibril length; and is important for both immune recognition and virulence. This chain is Alpha-1,2-mannosyltransferase MNN26 (MNN26), found in Candida albicans (strain SC5314 / ATCC MYA-2876) (Yeast).